A 351-amino-acid polypeptide reads, in one-letter code: N(4)-bis(aminopropyl)spermidine synthase (351 aa).

This sequence belongs to the branched-chain polyamine synthase family.

It is found in the cytoplasm. The enzyme catalyses 2 S-adenosyl 3-(methylsulfanyl)propylamine + spermidine = N(4)-bis(aminopropyl)spermidine + 2 S-methyl-5'-thioadenosine + 2 H(+). The protein operates within amine and polyamine biosynthesis. Functionally, involved in the biosynthesis of branched-chain polyamines, which support the growth of thermophiles under high-temperature conditions. Catalyzes the sequential condensation of spermidine with the aminopropyl groups of decarboxylated S-adenosylmethionines to produce N(4)-bis(aminopropyl)spermidine via N(4)-aminopropylspermidine. Can also use spermine to produce N(4)-aminopropylspermine. This is N(4)-bis(aminopropyl)spermidine synthase from Thermococcus kodakarensis (strain ATCC BAA-918 / JCM 12380 / KOD1) (Pyrococcus kodakaraensis (strain KOD1)).